A 439-amino-acid chain; its full sequence is Cobyrinate a,c-diamide synthase (439 aa).

In terms of domain architecture, GATase cobBQ-type spans 238 to 431 (KIAVAYDKAF…AHVNFLGNIE (194 aa)). Catalysis depends on Cys-320, which acts as the Nucleophile.

This sequence belongs to the CobB/CbiA family. It depends on Mg(2+) as a cofactor.

The enzyme catalyses cob(II)yrinate + 2 L-glutamine + 2 ATP + 2 H2O = cob(II)yrinate a,c diamide + 2 L-glutamate + 2 ADP + 2 phosphate + 2 H(+). Its pathway is cofactor biosynthesis; adenosylcobalamin biosynthesis; cob(II)yrinate a,c-diamide from sirohydrochlorin (anaerobic route): step 10/10. Catalyzes the ATP-dependent amidation of the two carboxylate groups at positions a and c of cobyrinate, using either L-glutamine or ammonia as the nitrogen source. This chain is Cobyrinate a,c-diamide synthase, found in Clostridium tetani (strain Massachusetts / E88).